We begin with the raw amino-acid sequence, 81 residues long: Cytotoxin 8 (81 aa).

Positions 1–21 (MKTLLLTLVVVTIVCLDLGYT) are cleaved as a signal peptide. Disulfide bonds link cysteine 24/cysteine 42, cysteine 35/cysteine 59, cysteine 63/cysteine 74, and cysteine 75/cysteine 80.

This sequence belongs to the three-finger toxin family. Short-chain subfamily. Type IA cytotoxin sub-subfamily. As to quaternary structure, monomer in solution; Homodimer and oligomer in the presence of negatively charged lipids forming a pore with a size ranging between 20 and 30 Angstroms. As to expression, expressed by the venom gland.

The protein localises to the secreted. Its subcellular location is the target cell membrane. In terms of biological role, shows cytolytic activity on many different cells by forming pore in lipid membranes. In vivo, increases heart rate or kills the animal by cardiac arrest. In addition, it binds to heparin with high affinity, interacts with Kv channel-interacting protein 1 (KCNIP1) in a calcium-independent manner, and binds to integrin alpha-V/beta-3 (ITGAV/ITGB3) with moderate affinity. The protein is Cytotoxin 8 of Naja atra (Chinese cobra).